The following is a 590-amino-acid chain: Aspartate--tRNA(Asp/Asn) ligase (590 aa).

Position 173 (E173) interacts with L-aspartate. Residues 197-200 (QIFK) are aspartate. R219 lines the L-aspartate pocket. Residues 219 to 221 (RDE) and Q228 each bind ATP. H450 contacts L-aspartate. An ATP-binding site is contributed by E484. Residue R491 coordinates L-aspartate. Residue 536–539 (GLDR) participates in ATP binding.

Belongs to the class-II aminoacyl-tRNA synthetase family. Type 1 subfamily. Homodimer.

The protein localises to the cytoplasm. It catalyses the reaction tRNA(Asx) + L-aspartate + ATP = L-aspartyl-tRNA(Asx) + AMP + diphosphate. Functionally, aspartyl-tRNA synthetase with relaxed tRNA specificity since it is able to aspartylate not only its cognate tRNA(Asp) but also tRNA(Asn). Reaction proceeds in two steps: L-aspartate is first activated by ATP to form Asp-AMP and then transferred to the acceptor end of tRNA(Asp/Asn). The polypeptide is Aspartate--tRNA(Asp/Asn) ligase (Coxiella burnetii (strain Dugway 5J108-111)).